The following is a 453-amino-acid chain: MPREIVTVQLGQCGNQMGAVYWQRLCAEHGISSEGILEEWATEGGDRKDVFFYQADDEHYIPRAILVDLEPRVINNILASPYANLYNPENIFVSKDGGGAGNNWAQGYSAGERIYEDIMEMIDREAEGSDSLEGFMVMHSIAGGTGSGLGSFLLERLNDKFPKKLIQTYSVFPNAQEGDVVVQPYNSLLALKRLVNHADSVVVLDNGALARISADRLHVQTPSFDQTNQLVSTVIAASTQTLRYPGYMNNDLVGIIASLIPTPRCHFLMTSYTPFTSDQIDKAKTIRRTTVLDVMRRLLQPKNRMVLTTPSKTACYISILNIIQGEVDPTDVHQSLLRIRERQLANFIPWGPASIQVALTKRSPYVTTNHRVSGLMLANHTSVASLFKRMLDQFDRLRKRNAFIEQYKKEKMFANGLEEFDDARATCDELLKEYKACESPDYVSFGGPDGDQS.

142-148 (AGGTGSG) is a GTP binding site.

It belongs to the tubulin family.

The protein localises to the cytoplasm. It localises to the cytoskeleton. It is found in the microtubule organizing center. Its subcellular location is the spindle pole body. Its function is as follows. Tubulin is the major constituent of microtubules. The gamma chain is found at microtubule organizing centers (MTOC) such as the spindle poles or the centrosome, suggesting that it is involved in the minus-end nucleation of microtubule assembly. The chain is Tubulin gamma chain (TUB4) from Coprinopsis cinerea (strain Okayama-7 / 130 / ATCC MYA-4618 / FGSC 9003) (Inky cap fungus).